The following is a 358-amino-acid chain: Holliday junction branch migration complex subunit RuvB (358 aa).

Positions methionine 1 to isoleucine 24 are disordered. Residues asparagine 8–proline 22 are compositionally biased toward polar residues. The tract at residues threonine 13–tyrosine 195 is large ATPase domain (RuvB-L). Residues isoleucine 34, arginine 35, glycine 76, lysine 79, threonine 80, threonine 81, glutamate 142 to tyrosine 144, arginine 185, tyrosine 195, and arginine 232 contribute to the ATP site. Threonine 80 provides a ligand contact to Mg(2+). Residues alanine 196–asparagine 266 are small ATPAse domain (RuvB-S). The segment at serine 269 to phenylalanine 358 is head domain (RuvB-H). Residues arginine 324 and arginine 329 each contribute to the DNA site.

It belongs to the RuvB family. Homohexamer. Forms an RuvA(8)-RuvB(12)-Holliday junction (HJ) complex. HJ DNA is sandwiched between 2 RuvA tetramers; dsDNA enters through RuvA and exits via RuvB. An RuvB hexamer assembles on each DNA strand where it exits the tetramer. Each RuvB hexamer is contacted by two RuvA subunits (via domain III) on 2 adjacent RuvB subunits; this complex drives branch migration. In the full resolvosome a probable DNA-RuvA(4)-RuvB(12)-RuvC(2) complex forms which resolves the HJ.

It localises to the cytoplasm. It catalyses the reaction ATP + H2O = ADP + phosphate + H(+). The RuvA-RuvB-RuvC complex processes Holliday junction (HJ) DNA during genetic recombination and DNA repair, while the RuvA-RuvB complex plays an important role in the rescue of blocked DNA replication forks via replication fork reversal (RFR). RuvA specifically binds to HJ cruciform DNA, conferring on it an open structure. The RuvB hexamer acts as an ATP-dependent pump, pulling dsDNA into and through the RuvAB complex. RuvB forms 2 homohexamers on either side of HJ DNA bound by 1 or 2 RuvA tetramers; 4 subunits per hexamer contact DNA at a time. Coordinated motions by a converter formed by DNA-disengaged RuvB subunits stimulates ATP hydrolysis and nucleotide exchange. Immobilization of the converter enables RuvB to convert the ATP-contained energy into a lever motion, pulling 2 nucleotides of DNA out of the RuvA tetramer per ATP hydrolyzed, thus driving DNA branch migration. The RuvB motors rotate together with the DNA substrate, which together with the progressing nucleotide cycle form the mechanistic basis for DNA recombination by continuous HJ branch migration. Branch migration allows RuvC to scan DNA until it finds its consensus sequence, where it cleaves and resolves cruciform DNA. The sequence is that of Holliday junction branch migration complex subunit RuvB from Microcystis aeruginosa (strain NIES-843 / IAM M-2473).